Here is an 84-residue protein sequence, read N- to C-terminus: U8-theraphotoxin-Hhn1c 1 (84 aa).

The signal sequence occupies residues 1 to 21 (MKVVLIVCLVWVMAMMELVSC). 5 cysteine pairs are disulfide-bonded: cysteine 23–cysteine 35, cysteine 29–cysteine 44, cysteine 34–cysteine 67, cysteine 54–cysteine 75, and cysteine 69–cysteine 81.

It belongs to the AVIT (prokineticin) family. Expressed by the venom gland.

Its subcellular location is the secreted. This is U8-theraphotoxin-Hhn1c 1 from Cyriopagopus hainanus (Chinese bird spider).